A 3071-amino-acid chain; its full sequence is Intermembrane lipid transfer protein vps1301 (3071 aa).

A Chorein N-terminal domain is found at 2–115 (LEGLVAGLLN…QQALKQEQLD (114 aa)). The region spanning 2143–2415 (HIEIFSPYII…KYSWDYPCCA (273 aa)) is the SHR-BD domain.

Belongs to the VPS13 family.

The protein localises to the golgi apparatus. The protein resides in the trans-Golgi network. Functionally, mediates the transfer of lipids between membranes at organelle contact sites. May play a role in mitochondrial lipid homeostasis, Golgi vesicle transport, reticulophagy, actin cytoskeleton organization and formation of the forespore membrane. In Schizosaccharomyces pombe (strain 972 / ATCC 24843) (Fission yeast), this protein is Intermembrane lipid transfer protein vps1301.